Consider the following 145-residue polypeptide: Ribosomal RNA large subunit methyltransferase H (145 aa).

S-adenosyl-L-methionine is bound by residues Leu64, Gly93, and 112–117; that span reads LSPLTF.

Belongs to the RNA methyltransferase RlmH family. Homodimer.

It is found in the cytoplasm. It carries out the reaction pseudouridine(1915) in 23S rRNA + S-adenosyl-L-methionine = N(3)-methylpseudouridine(1915) in 23S rRNA + S-adenosyl-L-homocysteine + H(+). In terms of biological role, specifically methylates the pseudouridine at position 1915 (m3Psi1915) in 23S rRNA. The sequence is that of Ribosomal RNA large subunit methyltransferase H from Prochlorococcus marinus (strain MIT 9211).